The following is an 840-amino-acid chain: Cytosolic carboxypeptidase 2 (840 aa).

Residues 358-628 (YPYTYTDLQC…HVCDTLLDFC (271 aa)) enclose the Peptidase M14 domain. 3 residues coordinate Zn(2+): H424, E427, and H520. Catalysis depends on E592, which acts as the Proton donor/acceptor. A compositionally biased stretch (basic residues) spans 706–719 (MFKKKKKKSLQTRK). 2 disordered regions span residues 706 to 726 (MFKK…EQYQ) and 758 to 789 (ESSS…LDPS).

It belongs to the peptidase M14 family. In terms of assembly, interacts with RARRES1, KIF11 and MAPRE1. Zn(2+) serves as cofactor.

The protein localises to the cytoplasm. It is found in the cytosol. It localises to the cytoskeleton. Its subcellular location is the microtubule organizing center. The protein resides in the centrosome. The protein localises to the centriole. It is found in the cilium basal body. It carries out the reaction (L-glutamyl)(n+1)-gamma-L-glutamyl-L-glutamyl-[protein] + H2O = (L-glutamyl)(n)-gamma-L-glutamyl-L-glutamyl-[protein] + L-glutamate. Inhibited by RARRES1. Metallocarboxypeptidase that mediates deglutamylation of tubulin and non-tubulin target proteins. Catalyzes the removal of polyglutamate side chains present on the gamma-carboxyl group of glutamate residues within the C-terminal tail of tubulin protein. Specifically cleaves tubulin long-side-chains, while it is not able to remove the branching point glutamate. Also catalyzes the removal of polyglutamate residues from the carboxy-terminus of non-tubulin proteins such as MYLK. The polypeptide is Cytosolic carboxypeptidase 2 (AGBL2) (Macaca fascicularis (Crab-eating macaque)).